We begin with the raw amino-acid sequence, 1072 residues long: DNA-directed RNA polymerase subunit beta (1072 aa).

This sequence belongs to the RNA polymerase beta chain family. In terms of assembly, in plastids the minimal PEP RNA polymerase catalytic core is composed of four subunits: alpha, beta, beta', and beta''. When a (nuclear-encoded) sigma factor is associated with the core the holoenzyme is formed, which can initiate transcription.

The protein resides in the plastid. Its subcellular location is the chloroplast. It catalyses the reaction RNA(n) + a ribonucleoside 5'-triphosphate = RNA(n+1) + diphosphate. DNA-dependent RNA polymerase catalyzes the transcription of DNA into RNA using the four ribonucleoside triphosphates as substrates. The chain is DNA-directed RNA polymerase subunit beta from Arabis hirsuta (Hairy rock-cress).